Reading from the N-terminus, the 1285-residue chain is Transmembrane channel-like protein 1 (1285 aa).

Residues 1–29 (MQEAARRASLRKEHTPTNEKFGDLSKQDS) are disordered. Over 1 to 164 (MQEAARRASL…KIKRIESHFG (164 aa)) the chain is Cytoplasmic. Residues 165-202 (SVVSSYFTFLRWIVFVNIMITLIALVFVVLPETLADSV) form a helical membrane-spanning segment. The Extracellular portion of the chain corresponds to 203–260 (ANEGRFNRTKTRKQIPANERVHADELAVVWHYDGYLRYSPLFYGYYSDDPFLGNKIKY). An N-linked (GalNAc...) asparagine glycan is attached at Asn-209. A helical transmembrane segment spans residues 261–292 (ALPLAYFMVTLTIFAYSFFAILRKMAANARMS). Over 293–349 (KLSGSKAEQYIFNWKLFTGWDYTIGNSETASNTVMAVVIKLRESIADIKKDAHGKFR) the chain is Cytoplasmic. A helical membrane pass occupies residues 350 to 381 (LLQFSLRVFANIIICAMLGFSIYCIIFAVQKS). Topologically, residues 382–388 (QVQDDGN) are extracellular. Residues 389-416 (LFTKNQVPSVVSTITHVFPMIFDLIGKM) traverse the membrane as a helical segment. The Cytoplasmic portion of the chain corresponds to 417-420 (ENYH). The helical transmembrane segment at 421–455 (PRTALRAHLGRVLILYTVNYITLIFALFEKMTALR) threads the bilayer. Residues 456–667 (DRVNSTSTSS…NHDGHNNDIC (212 aa)) lie on the Extracellular side of the membrane. The segment at 458–488 (VNSTSTSSSHRTKRQQGGWNPNMQRPPPYAS) is disordered. The cysteines at positions 667 and 816 are disulfide-linked. A helical transmembrane segment spans residues 668–705 (WETIIGQEIVKLVTMDLIFTILSILVIDLFRGLWIKYC). Positions 696 to 720 (LFRGLWIKYCSSWWCWDIETTFPEY) are required for interaction with tmie. Residues 706–724 (SSWWCWDIETTFPEYGEFK) are Cytoplasmic-facing. Residues 725 to 745 (VAENVLHIINNQGMIWLGLFF) traverse the membrane as a helical segment. The Extracellular segment spans residues 746-748 (APL). Residues 749 to 771 (LPAINNIKLIILMYIRGWAVMTC) form a helical membrane-spanning segment. The interval 766–773 (WAVMTCNV) is required for interaction with tmie. The Cytoplasmic portion of the chain corresponds to 772–785 (NVPAREIFRASRSS). Residues 786–809 (NFYLGILLIWLLLCTLPVGFVIAS) traverse the membrane as a helical segment. The Extracellular portion of the chain corresponds to 810–852 (MSPSRSCGPFARYQHFYTVVTREIEKRVDQTVLSYIRHIASPG). Residues 853 to 886 (VVIPIILFLILIIYFLFSLVRGLREANTDLQAQL) form a helical membrane-spanning segment. The Cytoplasmic portion of the chain corresponds to 887–1285 (VHERTEEKKK…DEDDSPRQID (399 aa)). 2 disordered regions span residues 940 to 962 (ADHA…DDER) and 1114 to 1285 (TIKE…RQID). Residues 948 to 961 (SSEESDINEDEDDE) show a composition bias toward acidic residues. 3 stretches are compositionally biased toward basic and acidic residues: residues 1121-1131 (DPGKSDKKQTS), 1146-1156 (DEARALREKMK), and 1167-1182 (TVEE…ESEF). The segment covering 1197-1208 (TEEENEEEETDS) has biased composition (acidic residues).

Belongs to the TMC family. Homodimer. Interacts with calm-1 and tmie to form the MET channel. Expressed in the ASH polymodal avoidance neurons. Also expressed in other sensory neurons, including the ADF, ASE, ADL, AQR, PQR, URX and PHA cells.

It is found in the cell membrane. It carries out the reaction Na(+)(in) = Na(+)(out). The enzyme catalyses Ca(2+)(in) = Ca(2+)(out). The catalysed reaction is K(+)(in) = K(+)(out). Pore-forming subunit of the mechanotransducer (MET) non-selective cation channel complex. The MET complex is composed of symmetric dimeric MET channels, each channel comprising two copies of pore-forming ion-conducting transmembrane TMC subunits and auxiliary proteins including the transmembrane inner ear protein/tmie, the calcium-binding protein/calm-1 and arrestin domain protein arrd-6. Sodium ions are the most permeable, whereas calcium and potassium have lower indices. Sodium-sensor ion channel that acts specifically in salt taste chemosensation. Required for salt-evoked neuronal activity and behavioral avoidance of high concentrations of NaCl. In Caenorhabditis elegans, this protein is Transmembrane channel-like protein 1 (tmc-1).